Consider the following 162-residue polypeptide: NADH-quinone oxidoreductase subunit I (162 aa).

4Fe-4S ferredoxin-type domains lie at 54-83 and 93-122; these read RRYE…INST and SSYE…ETNI. [4Fe-4S] cluster is bound by residues Cys-63, Cys-66, Cys-69, Cys-73, Cys-102, Cys-105, Cys-108, and Cys-112.

The protein belongs to the complex I 23 kDa subunit family. NDH-1 is composed of 14 different subunits. Subunits NuoA, H, J, K, L, M, N constitute the membrane sector of the complex. Requires [4Fe-4S] cluster as cofactor.

The protein localises to the cell inner membrane. It carries out the reaction a quinone + NADH + 5 H(+)(in) = a quinol + NAD(+) + 4 H(+)(out). Functionally, NDH-1 shuttles electrons from NADH, via FMN and iron-sulfur (Fe-S) centers, to quinones in the respiratory chain. The immediate electron acceptor for the enzyme in this species is believed to be ubiquinone. Couples the redox reaction to proton translocation (for every two electrons transferred, four hydrogen ions are translocated across the cytoplasmic membrane), and thus conserves the redox energy in a proton gradient. In Francisella philomiragia subsp. philomiragia (strain ATCC 25017 / CCUG 19701 / FSC 153 / O#319-036), this protein is NADH-quinone oxidoreductase subunit I.